Consider the following 189-residue polypeptide: Prophage DNA-packing protein NohA (189 aa).

The protein belongs to the terminase small subunit family.

The sequence is that of Prophage DNA-packing protein NohA (nohA) from Escherichia coli (strain K12).